Reading from the N-terminus, the 79-residue chain is Acyl carrier protein (79 aa).

The 79-residue stretch at 1 to 79 (MTKEQILVDV…DVVSYIETQV (79 aa)) folds into the Carrier domain. Residue serine 39 is modified to O-(pantetheine 4'-phosphoryl)serine.

Belongs to the acyl carrier protein (ACP) family. In terms of processing, 4'-phosphopantetheine is transferred from CoA to a specific serine of apo-ACP by AcpS. This modification is essential for activity because fatty acids are bound in thioester linkage to the sulfhydryl of the prosthetic group.

It localises to the cytoplasm. The protein operates within lipid metabolism; fatty acid biosynthesis. Functionally, carrier of the growing fatty acid chain in fatty acid biosynthesis. This is Acyl carrier protein from Exiguobacterium sibiricum (strain DSM 17290 / CCUG 55495 / CIP 109462 / JCM 13490 / 255-15).